We begin with the raw amino-acid sequence, 114 residues long: RNA polymerase-binding protein RbpA (114 aa).

The protein belongs to the RNA polymerase-binding protein RbpA family. In terms of assembly, monomer. Forms a complex with the RNAP catalytic core, specifically with the beta subunit (RpoB); its binding site may overlap with that of Rif. May bind free principal sigma factors.

Functionally, binds to RNA polymerase (RNAP), probably stimulating transcriptions from principal, but not alternative sigma factor promoters. Partially restores transcription in the presence of rifampicin (Rif) in vitro; overexpression leads to an increase in the Rif tolerance in vivo, with smaller colonies. Seems to act by removing Rif from its binding site and preventing its further binding. No longer stimulates transcription in Rif-resistant RNA polymerase (with mutations in rpoB). In Mycolicibacterium smegmatis (strain ATCC 700084 / mc(2)155) (Mycobacterium smegmatis), this protein is RNA polymerase-binding protein RbpA.